The primary structure comprises 487 residues: V-type proton ATPase subunit B2 (487 aa).

G2 is modified (N-acetylglycine).

This sequence belongs to the ATPase alpha/beta chains family. As to quaternary structure, V-ATPase is a heteromultimeric enzyme composed of a peripheral catalytic V1 complex (components A to H) attached to an integral membrane V0 proton pore complex (components: a, c, c'', d and e).

The protein localises to the vacuole membrane. Its function is as follows. Non-catalytic subunit of the peripheral V1 complex of vacuolar ATPase. V-ATPase is responsible for acidifying a variety of intracellular compartments in eukaryotic cells. The chain is V-type proton ATPase subunit B2 (VHA-B2) from Arabidopsis thaliana (Mouse-ear cress).